The primary structure comprises 363 residues: Type-1 angiotensin II receptor B (363 aa).

Over 1–27 (MLSNISAGENSEVEKIVVKCSKSGMHN) the chain is Extracellular. N-linked (GlcNAc...) asparagine glycosylation is present at asparagine 4. 2 disulfide bridges follow: cysteine 20-cysteine 274 and cysteine 103-cysteine 182. A helical transmembrane segment spans residues 28–57 (YIFITIPIIYSTIFVVGVFGNSLVVIVIYS). The Cytoplasmic portion of the chain corresponds to 58–63 (YMKMKT). The helical transmembrane segment at 64–91 (MASVFLMNLALSDLCFVITLPLWAVYTA) threads the bilayer. Over 92 to 100 (MHYHWPFGD) the chain is Extracellular. The helical transmembrane segment at 101–127 (LLCKIASTAITLNLYTTVFLLTCLSID) threads the bilayer. Residues 128-143 (RYSAIVHPMKSRIRRT) are Cytoplasmic-facing. The chain crosses the membrane as a helical span at residues 144–167 (VMVARLTCVGIWLVAFLASLPSVI). The Extracellular portion of the chain corresponds to 168–192 (YRQIFIFPDTNQTVCALVYHSGHIY). Arginine 169 serves as a coordination point for angiotensin II. Asparagine 178 carries N-linked (GlcNAc...) asparagine glycosylation. Tyrosine 186 and lysine 201 together coordinate angiotensin II. Residues 193–218 (FMVGMSLVKNIVGFFIPFVIILTSYT) form a helical membrane-spanning segment. The Cytoplasmic segment spans residues 219–239 (LIGKTLKEVYRAQRARNDDIF). A helical transmembrane segment spans residues 240–268 (KMIVAVVLLFFFCWIPHQVFTFLDVLIQM). Topologically, residues 269–278 (DVIQNCKMYD) are extracellular. A helical membrane pass occupies residues 279 to 304 (IVDTGMPITICIAYFNSCLNPFLYGF). Over 305 to 363 (FGKKFRKHFLQLIKYIPPKMRTHASVNTKSSTVSQRLSDTKCASNKIALWIFDIEEHCK) the chain is Cytoplasmic. S-palmitoyl cysteine attachment occurs at residues cysteine 346 and cysteine 362.

The protein belongs to the G-protein coupled receptor 1 family. C-terminal Ser or Thr residues may be phosphorylated. Heart membranes, follicular oocytes.

It localises to the cell membrane. In terms of biological role, receptor for angiotensin II, a vasoconstricting peptide, which acts as a key regulator of blood pressure and sodium retention by the kidney. The activated receptor in turn couples to G-alpha proteins G(q) (GNAQ, GNA11, GNA14 or GNA15) and thus activates phospholipase C and increases the cytosolic Ca(2+) concentrations, which in turn triggers cellular responses such as stimulation of protein kinase C. This chain is Type-1 angiotensin II receptor B (agtr1-b), found in Xenopus laevis (African clawed frog).